We begin with the raw amino-acid sequence, 454 residues long: Asparagine--tRNA ligase (454 aa).

Belongs to the class-II aminoacyl-tRNA synthetase family. Homodimer.

The protein localises to the cytoplasm. It catalyses the reaction tRNA(Asn) + L-asparagine + ATP = L-asparaginyl-tRNA(Asn) + AMP + diphosphate + H(+). This is Asparagine--tRNA ligase from Ureaplasma urealyticum serovar 10 (strain ATCC 33699 / Western).